We begin with the raw amino-acid sequence, 859 residues long: Envelope glycoprotein gp160 (859 aa).

The first 24 residues, Met-1 to Gln-24, serve as a signal peptide directing secretion. The Extracellular portion of the chain corresponds to Gln-25 to Tyr-680. N-linked (GlcNAc...) asparagine; by host glycosylation occurs at Asn-38. An intrachain disulfide couples Cys-45 to Cys-58. N-linked (GlcNAc...) asparagine; by host glycosylation is found at Asn-71, Asn-115, Asn-148, Asn-163, Asn-176, Asn-188, Asn-195, Asn-205, Asn-237, Asn-247, Asn-271, Asn-277, Asn-288, Asn-299, Asn-309, Asn-343, Asn-366, Asn-398, Asn-411, Asn-448, Asn-463, and Asn-467. 5 disulfide bridges follow: Cys-102-Cys-213, Cys-109-Cys-204, Cys-114-Cys-160, Cys-226-Cys-256, and Cys-236-Cys-248. The V1 stretch occupies residues Cys-114–Lys-159. Residues Cys-160–Cys-204 are V2. The interval Cys-304–Trp-337 is V3. A disulfide bond links Cys-304 and Cys-338. Cystine bridges form between Cys-390–Cys-447 and Cys-397–Cys-420. The tract at residues Cys-397–Cys-420 is V4. The interval Asn-463–Phe-470 is V5. Residues Gly-513–Ala-533 form a fusion peptide region. The segment at Leu-576–Gln-592 is immunosuppression. N-linked (GlcNAc...) asparagine; by host glycosylation is found at Asn-612, Asn-621, and Asn-637. Residues Gln-625 to Gln-646 are a coiled coil. The MPER; binding to GalCer stretch occupies residues Lys-658–Gln-679. Residues Gly-681–Leu-701 traverse the membrane as a helical segment. The Cytoplasmic portion of the chain corresponds to Ser-702–Leu-859. A YXXV motif; contains endocytosis signal motif is present at residues Tyr-708–Val-711. Positions Lys-726 to Gly-745 are disordered. Cys-774 carries the S-palmitoyl cysteine; by host lipid modification. Residues Leu-858–Leu-859 carry the Di-leucine internalization motif motif.

The mature envelope protein (Env) consists of a homotrimer of non-covalently associated gp120-gp41 heterodimers. The resulting complex protrudes from the virus surface as a spike. There seems to be as few as 10 spikes on the average virion. Interacts with human CD4, CCR5 and CXCR4, to form a P4HB/PDI-CD4-CXCR4-gp120 complex. Gp120 also interacts with the C-type lectins CD209/DC-SIGN and CLEC4M/DC-SIGNR (collectively referred to as DC-SIGN(R)). Gp120 and gp41 interact with GalCer. As to quaternary structure, the mature envelope protein (Env) consists of a homotrimer of non-covalently associated gp120-gp41 heterodimers. The resulting complex protrudes from the virus surface as a spike. There seems to be as few as 10 spikes on the average virion. Specific enzymatic cleavages in vivo yield mature proteins. Envelope glycoproteins are synthesized as an inactive precursor that is heavily N-glycosylated and processed likely by host cell furin in the Golgi to yield the mature SU and TM proteins. The cleavage site between SU and TM requires the minimal sequence [KR]-X-[KR]-R. Post-translationally, palmitoylation of the transmembrane protein and of Env polyprotein (prior to its proteolytic cleavage) is essential for their association with host cell membrane lipid rafts. Palmitoylation is therefore required for envelope trafficking to classical lipid rafts, but not for viral replication.

It localises to the virion membrane. Its subcellular location is the host cell membrane. The protein resides in the host endosome membrane. The surface protein gp120 (SU) attaches the virus to the host lymphoid cell by binding to the primary receptor CD4. This interaction induces a structural rearrangement creating a high affinity binding site for a chemokine coreceptor like CXCR4 and/or CCR5. This peculiar 2 stage receptor-interaction strategy allows gp120 to maintain the highly conserved coreceptor-binding site in a cryptic conformation, protected from neutralizing antibodies. Since CD4 also displays a binding site for the disulfide-isomerase P4HB/PDI, a P4HB/PDI-CD4-CXCR4-gp120 complex may form. In that complex, P4HB/PDI could reach and reduce gp120 disulfide bonds, causing major conformational changes in gp120. TXN, another PDI family member could also be involved in disulfide rearrangements in Env during fusion. These changes are transmitted to the transmembrane protein gp41 and are thought to activate its fusogenic potential by unmasking its fusion peptide. Its function is as follows. The surface protein gp120 is a ligand for CD209/DC-SIGN and CLEC4M/DC-SIGNR, which are respectively found on dendritic cells (DCs), and on endothelial cells of liver sinusoids and lymph node sinuses. These interactions allow capture of viral particles at mucosal surfaces by these cells and subsequent transmission to permissive cells. DCs are professional antigen presenting cells, critical for host immunity by inducing specific immune responses against a broad variety of pathogens. They act as sentinels in various tissues where they take up antigen, process it, and present it to T-cells following migration to lymphoid organs. HIV subverts the migration properties of dendritic cells to gain access to CD4+ T-cells in lymph nodes. Virus transmission to permissive T-cells occurs either in trans (without DCs infection, through viral capture and transmission), or in cis (following DCs productive infection, through the usual CD4-gp120 interaction), thereby inducing a robust infection. In trans infection, bound virions remain infectious over days and it is proposed that they are not degraded, but protected in non-lysosomal acidic organelles within the DCs close to the cell membrane thus contributing to the viral infectious potential during DCs' migration from the periphery to the lymphoid tissues. On arrival at lymphoid tissues, intact virions recycle back to DCs' cell surface allowing virus transmission to CD4+ T-cells. Virion capture also seems to lead to MHC-II-restricted viral antigen presentation, and probably to the activation of HIV-specific CD4+ cells. In terms of biological role, the transmembrane protein gp41 (TM) acts as a class I viral fusion protein. Under the current model, the protein has at least 3 conformational states: pre-fusion native state, pre-hairpin intermediate state, and post-fusion hairpin state. During fusion of viral and target intracellular membranes, the coiled coil regions (heptad repeats) assume a trimer-of-hairpins structure, positioning the fusion peptide in close proximity to the C-terminal region of the ectodomain. The formation of this structure appears to drive apposition and subsequent fusion of viral and target cell membranes. Complete fusion occurs in host cell endosomes and is dynamin-dependent, however some lipid transfer might occur at the plasma membrane. The virus undergoes clathrin-dependent internalization long before endosomal fusion, thus minimizing the surface exposure of conserved viral epitopes during fusion and reducing the efficacy of inhibitors targeting these epitopes. Membranes fusion leads to delivery of the nucleocapsid into the cytoplasm. Functionally, the envelope glycoprotein gp160 precursor down-modulates cell surface CD4 antigen by interacting with it in the endoplasmic reticulum and blocking its transport to the cell surface. The gp120-gp41 heterodimer seems to contribute to T-cell depletion during HIV-1 infection. The envelope glycoproteins expressed on the surface of infected cells induce apoptosis through an interaction with uninfected cells expressing the receptor (CD4) and the coreceptors CXCR4 or CCR5. This type of bystander killing may be obtained by at least three distinct mechanisms. First, the interaction between the 2 cells can induce cellular fusion followed by nuclear fusion within the syncytium. Syncytia are condemned to die from apoptosis. Second, the 2 interacting cells may not fuse entirely and simply exchange plasma membrane lipids, after a sort of hemifusion process, followed by rapid death. Third, it is possible that virus-infected cells, on the point of undergoing apoptosis, fuse with CD4-expressing cells, in which case apoptosis is rapidly transmitted from one cell to the other and thus occurs in a sort of contagious fashion. Its function is as follows. The gp120-gp41 heterodimer allows rapid transcytosis of the virus through CD4 negative cells such as simple epithelial monolayers of the intestinal, rectal and endocervical epithelial barriers. Both gp120 and gp41 specifically recognize glycosphingolipids galactosyl-ceramide (GalCer) or 3' sulfo-galactosyl-ceramide (GalS) present in the lipid rafts structures of epithelial cells. Binding to these alternative receptors allows the rapid transcytosis of the virus through the epithelial cells. This transcytotic vesicle-mediated transport of virions from the apical side to the basolateral side of the epithelial cells does not involve infection of the cells themselves. The protein is Envelope glycoprotein gp160 (env) of Human immunodeficiency virus type 2 subtype A (isolate CAM2) (HIV-2).